The chain runs to 590 residues: Hyaluronan synthase 1 (590 aa).

The Cytoplasmic portion of the chain corresponds to 1–31 (MKDKAAATMEIPEDPGIPKNLERKRPIVWRM). Residues 32-52 (IYYSFAVLLLAAFTAAYVTEF) form a helical membrane-spanning segment. Residues 53-60 (QILTHEDV) are Extracellular-facing. Residues 61–81 (LFSLGLYGLVMFLHLMMQSLF) traverse the membrane as a helical segment. Topologically, residues 82 to 401 (AYLEIRRINK…YNAQWWYKHH (320 aa)) are cytoplasmic. Residues 402-422 (IWMTYESVVHFIFPFFITATV) traverse the membrane as a helical segment. The Extracellular portion of the chain corresponds to 423–425 (IRL). Residues 426 to 446 (LYASTIWNVVWLLLCIQIMSV) traverse the membrane as a helical segment. The Cytoplasmic segment spans residues 447–456 (LKSLYACWLR). The chain crosses the membrane as a helical span at residues 457–477 (GNPIMLLMSLYSMLYMTGLLP). Residues 478–505 (SKYFAMLTINKSGWGTSGRKKIVGNYMP) are Extracellular-facing. A helical membrane pass occupies residues 506-526 (VLPLSIWMAVLCGGVGYSIYM). Topologically, residues 527 to 543 (DCHQDWSTPEKQKELYH) are cytoplasmic. The helical transmembrane segment at 544-564 (LLYGCISYTLYWVLMALMYWV) threads the bilayer. Residues 565–588 (WVKRCCRKRSQTVTLVHDIPERLV) are Extracellular-facing.

Belongs to the NodC/HAS family. Requires Mg(2+) as cofactor.

Its subcellular location is the membrane. The enzyme catalyses [hyaluronan](n) + UDP-N-acetyl-alpha-D-glucosamine = N-acetyl-beta-D-glucosaminyl-(1-&gt;4)-[hyaluronan](n) + UDP + H(+). It catalyses the reaction N-acetyl-beta-D-glucosaminyl-(1-&gt;4)-[hyaluronan](n) + UDP-alpha-D-glucuronate = [hyaluronan](n+1) + UDP + H(+). It functions in the pathway glycan biosynthesis; hyaluronan biosynthesis. Functionally, catalyzes the addition of GlcNAc or GlcUA monosaccharides to the nascent hyaluronan polymer. Therefore, it is essential to hyaluronan synthesis a major component of most extracellular matrices that has a structural role in tissues architectures and regulates cell adhesion, migration and differentiation. Also able to catalyze the synthesis of chito-oligosaccharide depending on the substrate. This Xenopus tropicalis (Western clawed frog) protein is Hyaluronan synthase 1 (has1).